Reading from the N-terminus, the 653-residue chain is Eukaryotic translation initiation factor 4E-binding protein Mextli (653 aa).

The KH domain occupies 227–292 (YCKDEVVIRN…DKINYAKQLM (66 aa)). Disordered regions lie at residues 311–335 (VGGSCSSLNSSNSDDAIVQPRTPTG) and 515–570 (EGDD…AGTN). 2 stretches are compositionally biased toward low complexity: residues 314–323 (SCSSLNSSNS) and 525–536 (SNGGSSTSNQNG). A compositionally biased stretch (basic and acidic residues) spans 546 to 563 (SRKESTPETKGAREKGDL).

In terms of assembly, interacts with eukaryotic translation initiation factor eIF4E1. Also interacts with eukaryotic translation initiation factor 3 complex members eif3-S9/eif3b, Int6/eif3e and eIF-3p40/eif3h and with CG3225.

The protein localises to the cytoplasm. It localises to the cytoplasmic ribonucleoprotein granule. Its function is as follows. Plays a role in promoting translation. The polypeptide is Eukaryotic translation initiation factor 4E-binding protein Mextli (Drosophila melanogaster (Fruit fly)).